The primary structure comprises 436 residues: UPF0597 protein YhaM (436 aa).

It belongs to the UPF0597 family.

The sequence is that of UPF0597 protein YhaM from Escherichia coli (strain K12 / MC4100 / BW2952).